We begin with the raw amino-acid sequence, 395 residues long: Probable L-tyrosine/L-aspartate decarboxylase (395 aa).

Residue Lys242 is modified to N6-(pyridoxal phosphate)lysine.

The protein belongs to the group II decarboxylase family. MfnA subfamily. Requires pyridoxal 5'-phosphate as cofactor.

The catalysed reaction is L-tyrosine + H(+) = tyramine + CO2. It carries out the reaction L-aspartate + H(+) = beta-alanine + CO2. It functions in the pathway cofactor biosynthesis; methanofuran biosynthesis. It participates in cofactor biosynthesis; coenzyme A biosynthesis. Its function is as follows. Catalyzes the decarboxylation of L-tyrosine to produce tyramine for methanofuran biosynthesis. Can also catalyze the decarboxylation of L-aspartate to produce beta-alanine for coenzyme A (CoA) biosynthesis. This chain is Probable L-tyrosine/L-aspartate decarboxylase, found in Methanosarcina acetivorans (strain ATCC 35395 / DSM 2834 / JCM 12185 / C2A).